A 569-amino-acid chain; its full sequence is Dihydroorotate dehydrogenase (quinone), mitochondrial (569 aa).

The N-terminal 23 residues, 1-23 (MISKLKPQFMFLPKKHILSYCRK), are a transit peptide targeting the mitochondrion. Residues 143–163 (IIFLLFVSLFGLYGFFESYNP) traverse the membrane as a helical segment. Residues 225 to 229 (AGFDK) and threonine 249 each bind FMN. Lysine 229 lines the substrate pocket. Substrate is bound by residues 274–278 (NSCGF) and asparagine 342. An FMN-binding site is contributed by asparagine 342. Catalysis depends on serine 345, which acts as the Nucleophile. Position 347 (asparagine 347) interacts with substrate. Lysine 429 is an FMN binding site. Substrate is bound at residue 458–459 (NT). Residues 477–478 (SG), 505–507 (SGG), and 528–529 (YS) each bind FMN.

The protein belongs to the dihydroorotate dehydrogenase family. Type 2 subfamily. In terms of assembly, monomer. Requires FMN as cofactor.

Its subcellular location is the mitochondrion inner membrane. The catalysed reaction is (S)-dihydroorotate + a quinone = orotate + a quinol. The protein operates within pyrimidine metabolism; UMP biosynthesis via de novo pathway; orotate from (S)-dihydroorotate (quinone route): step 1/1. In terms of biological role, catalyzes the conversion of dihydroorotate to orotate with quinone as electron acceptor. The sequence is that of Dihydroorotate dehydrogenase (quinone), mitochondrial from Plasmodium falciparum (isolate 3D7).